We begin with the raw amino-acid sequence, 103 residues long: MDIQYLMRQAKKLEKAMADAKEQLAELSVEAESGGGLVKVTMNGKCEVTRLLVDPKAVDPADKAMLEDLVTAAVNAAVEKARAAADEHMARATGGIKIPGVAG.

Belongs to the YbaB/EbfC family. As to quaternary structure, homodimer.

Its subcellular location is the cytoplasm. The protein localises to the nucleoid. Its function is as follows. Binds to DNA and alters its conformation. May be involved in regulation of gene expression, nucleoid organization and DNA protection. The polypeptide is Nucleoid-associated protein Anae109_3761 (Anaeromyxobacter sp. (strain Fw109-5)).